We begin with the raw amino-acid sequence, 353 residues long: Ribosomal RNA large subunit methyltransferase M (353 aa).

Residues S179, 212-215 (APGG), D231, D251, and D267 each bind S-adenosyl-L-methionine. Catalysis depends on K296, which acts as the Proton acceptor.

The protein belongs to the class I-like SAM-binding methyltransferase superfamily. RNA methyltransferase RlmE family. RlmM subfamily. As to quaternary structure, monomer.

It localises to the cytoplasm. The catalysed reaction is cytidine(2498) in 23S rRNA + S-adenosyl-L-methionine = 2'-O-methylcytidine(2498) in 23S rRNA + S-adenosyl-L-homocysteine + H(+). Catalyzes the 2'-O-methylation at nucleotide C2498 in 23S rRNA. The protein is Ribosomal RNA large subunit methyltransferase M of Laribacter hongkongensis (strain HLHK9).